Reading from the N-terminus, the 209-residue chain is Small ribosomal subunit protein uS4 (209 aa).

Basic residues predominate over residues 1–13 (MSTKSRTRSKTRL). Disordered regions lie at residues 1 to 20 (MSTK…LGIP) and 28 to 49 (YLEK…QDSD). The 82-residue stretch at 95–176 (QRLDALVVRS…PKLPSYLEVE (82 aa)) folds into the S4 RNA-binding domain.

This sequence belongs to the universal ribosomal protein uS4 family. Part of the 30S ribosomal subunit. Contacts protein S5. The interaction surface between S4 and S5 is involved in control of translational fidelity.

One of the primary rRNA binding proteins, it binds directly to 16S rRNA where it nucleates assembly of the body of the 30S subunit. Functionally, with S5 and S12 plays an important role in translational accuracy. The protein is Small ribosomal subunit protein uS4 of Clavibacter michiganensis subsp. michiganensis (strain NCPPB 382).